The primary structure comprises 66 residues: Metallothionein-like protein type 3 (66 aa).

It belongs to the metallothionein superfamily. Type 15 family.

Metallothioneins have a high content of cysteine residues that bind various heavy metals. This Malus domestica (Apple) protein is Metallothionein-like protein type 3 (MT2).